The chain runs to 190 residues: Ribonuclease HII (190 aa).

In terms of domain architecture, RNase H type-2 spans 1-190; sequence MAGVDEVGRG…FCRKIIENPD (190 aa). A divalent metal cation is bound by residues aspartate 5, glutamate 6, and aspartate 101.

This sequence belongs to the RNase HII family. The cofactor is Mn(2+). It depends on Mg(2+) as a cofactor.

The protein localises to the cytoplasm. The enzyme catalyses Endonucleolytic cleavage to 5'-phosphomonoester.. Its function is as follows. Endonuclease that specifically degrades the RNA of RNA-DNA hybrids. The chain is Ribonuclease HII (rnhB) from Synechocystis sp. (strain ATCC 27184 / PCC 6803 / Kazusa).